A 336-amino-acid chain; its full sequence is MFYYLIRKLLFLIDPEKAHTLVLMYLNSKKIQILRKIFIKPIPLKQIKCMGLTFNNKIGLAAGMDKNGDYIDSLSKIGFGFIEVGTVTPLPQYGNPKPRIFRVPSIEGIINRMGFNNLGIDYLVNNVKKSKFKGIIGINIGKNKDTKIEDAIKDYLICIEKIYFYASYIAINISSPNTINLRKLQYGILFENLLRDIKKKQSEMHSKYSKYVPIVIKISPDLSKKELIHISNKLIHYKIDGVIATNTTLDHSSIPKIKNNKEEGGLSGLPLQKKSNDVISILYKNLKRKIPIIGVGGINSINSAREKIMCGANLIQVYSGLIYHGPNFIREIIRNL.

FMN-binding positions include 62-66 (AGMDK) and Thr86. Lys66 is a binding site for substrate. 111 to 115 (NRMGF) contributes to the substrate binding site. Asn139 and Asn172 together coordinate FMN. Substrate is bound at residue Asn172. The active-site Nucleophile is the Ser175. Asn177 provides a ligand contact to substrate. Lys217 and Thr245 together coordinate FMN. 246–247 (NT) contributes to the substrate binding site. FMN-binding positions include Gly268, Gly297, and 318 to 319 (YS).

Belongs to the dihydroorotate dehydrogenase family. Type 2 subfamily. Monomer. The cofactor is FMN.

The protein resides in the cell membrane. The enzyme catalyses (S)-dihydroorotate + a quinone = orotate + a quinol. It functions in the pathway pyrimidine metabolism; UMP biosynthesis via de novo pathway; orotate from (S)-dihydroorotate (quinone route): step 1/1. In terms of biological role, catalyzes the conversion of dihydroorotate to orotate with quinone as electron acceptor. The sequence is that of Dihydroorotate dehydrogenase (quinone) from Buchnera aphidicola subsp. Schizaphis graminum (strain Sg).